Here is a 733-residue protein sequence, read N- to C-terminus: Methylmalonyl-CoA mutase large subunit (733 aa).

A compositionally biased stretch (acidic residues) spans 1 to 10 (MRIPEFDDIE). Residues 1–22 (MRIPEFDDIELGAGGGPSGSAE) are disordered. (R)-methylmalonyl-CoA-binding residues include Tyr-78, Met-81, Thr-88, Arg-90, Tyr-92, and Ser-117. Phe-120 and Ala-142 together coordinate cob(II)alamin. (R)-methylmalonyl-CoA contacts are provided by Thr-198 and Gln-200. Residues Val-209 and Arg-210 each coordinate cob(II)alamin. Residues Arg-210, His-247, Arg-286, and Ser-288 each contribute to the (R)-methylmalonyl-CoA site. 11 residues coordinate cob(II)alamin: Gly-336, Glu-373, Ala-376, Gly-612, His-613, Asp-614, Arg-615, Ser-658, Leu-660, Gly-689, and Thr-712. One can recognise a B12-binding domain in the interval 600–732 (RPRILVAKMG…KRLAADLGHE (133 aa)).

The protein belongs to the methylmalonyl-CoA mutase family. In terms of assembly, heterodimer of an alpha and a beta chain. Adenosylcob(III)alamin serves as cofactor.

It carries out the reaction (R)-methylmalonyl-CoA = succinyl-CoA. Its function is as follows. Catalyzes the isomerization of succinyl-CoA to methylmalonyl-CoA during synthesis of propionate from tricarboxylic acid-cycle intermediates. This conversion most likely represents an important source of building blocks for polyketide antibiotic biosynthesis. It is unable to catalyze the conversion of isobutyryl-CoA into N-butyryl-CoA. This chain is Methylmalonyl-CoA mutase large subunit (mutB), found in Streptomyces virginiae (Streptomyces cinnamonensis).